The primary structure comprises 233 residues: Probable chemoreceptor glutamine deamidase CheD (233 aa).

Belongs to the CheD family.

It catalyses the reaction L-glutaminyl-[protein] + H2O = L-glutamyl-[protein] + NH4(+). In terms of biological role, probably deamidates glutamine residues to glutamate on methyl-accepting chemotaxis receptors (MCPs), playing an important role in chemotaxis. The chain is Probable chemoreceptor glutamine deamidase CheD from Vibrio cholerae serotype O1 (strain ATCC 39315 / El Tor Inaba N16961).